The sequence spans 612 residues: Zinc metalloproteinase-disintegrin-like 2d (612 aa).

The first 20 residues, Met1 to Ser20, serve as a signal peptide directing secretion. The propeptide occupies Ile21 to Pro189. The region spanning Lys199–Pro395 is the Peptidase M12B domain. Glu202 lines the Ca(2+) pocket. Residue Asn218 is glycosylated (N-linked (GlcNAc...) asparagine). Asp286 provides a ligand contact to Ca(2+). 3 disulfide bridges follow: Cys310/Cys390, Cys350/Cys374, and Cys352/Cys357. Zn(2+) is bound at residue His335. Glu336 is a catalytic residue. Zn(2+)-binding residues include His339 and His345. Ca(2+)-binding residues include Cys390, Asn393, Val405, Asn408, Phe410, Glu412, Glu415, and Asp418. Residues Pro403–Asn489 form the Disintegrin domain. 14 cysteine pairs are disulfide-bonded: Cys406–Cys435, Cys417–Cys430, Cys419–Cys425, Cys429–Cys452, Cys443–Cys449, Cys448–Cys474, Cys461–Cys481, Cys468–Cys500, Cys493–Cys505, Cys512–Cys562, Cys527–Cys573, Cys540–Cys550, Cys557–Cys599, and Cys593–Cys605. Positions Glu467 to Asp469 match the D/ECD-tripeptide motif.

Belongs to the venom metalloproteinase (M12B) family. P-III subfamily. Zn(2+) is required as a cofactor. In terms of tissue distribution, expressed by the venom gland.

It localises to the secreted. Its function is as follows. Snake venom metalloproteinase that impairs hemostasis in the envenomed animal. The protein is Zinc metalloproteinase-disintegrin-like 2d of Crotalus adamanteus (Eastern diamondback rattlesnake).